A 550-amino-acid polypeptide reads, in one-letter code: Arginine--tRNA ligase (550 aa).

The 'HIGH' region signature appears at alanine 130–glycine 140.

This sequence belongs to the class-I aminoacyl-tRNA synthetase family. Monomer.

The protein resides in the cytoplasm. It catalyses the reaction tRNA(Arg) + L-arginine + ATP = L-arginyl-tRNA(Arg) + AMP + diphosphate. The chain is Arginine--tRNA ligase (argS) from Corynebacterium glutamicum (strain ATCC 13032 / DSM 20300 / JCM 1318 / BCRC 11384 / CCUG 27702 / LMG 3730 / NBRC 12168 / NCIMB 10025 / NRRL B-2784 / 534).